Reading from the N-terminus, the 226-residue chain is Tyramine N-feruloyltransferase 10/30 (226 aa).

Residues H29–H45 form an important in binding site and for catalytic activity region. Positions V72 to D222 constitute an N-acetyltransferase domain.

Belongs to the acetyltransferase family. As to quaternary structure, homodimer.

It is found in the cytoplasm. The enzyme catalyses tyramine + (E)-feruloyl-CoA = N-[(E)-feruloyl]tyramine + CoA + H(+). With respect to regulation, inhibited by (2-hydroxyphenyl)amino sulfinyl acetic acid 1,1-dimethylethyl ester, by DEPC and by N-ethylmaleimide. In terms of biological role, synthesizes amides which are involved in stress response in the cell wall. Catalyzes the synthesis of hydroxycinnamic acid amides from hydroxycinnamoyl-CoA thioesters and various hydroxyphenylethylamines such as 4-coumaroyl-CoA and sinapoyl-CoA. The sequence is that of Tyramine N-feruloyltransferase 10/30 (THT10) from Nicotiana tabacum (Common tobacco).